We begin with the raw amino-acid sequence, 191 residues long: Penicillin-binding protein activator LpoB (191 aa).

A signal peptide spans 1 to 16 (MKRYLSLALAALVLTG). Cys-17 is lipidated: N-palmitoyl cysteine. Cys-17 carries S-diacylglycerol cysteine lipidation.

The protein belongs to the LpoB family. Interacts with PBP1b.

The protein resides in the cell outer membrane. In terms of biological role, regulator of peptidoglycan synthesis that is essential for the function of penicillin-binding protein 1B (PBP1b). The protein is Penicillin-binding protein activator LpoB of Yersinia pestis (strain D182038).